The sequence spans 501 residues: Endoglucanase 8 (501 aa).

The signal sequence occupies residues 1 to 35 (MKPRSSRDGHNAAAAAALLLAALVLSGDVLPAVVA). Aspartate 95 functions as the Nucleophile in the catalytic mechanism. Asparagine 298 carries N-linked (GlcNAc...) asparagine glycosylation. Histidine 414 is a catalytic residue. Residue asparagine 462 is glycosylated (N-linked (GlcNAc...) asparagine). The active site involves aspartate 465. N-linked (GlcNAc...) asparagine glycosylation occurs at asparagine 469. Glutamate 474 is a catalytic residue.

The protein belongs to the glycosyl hydrolase 9 (cellulase E) family.

It is found in the secreted. The catalysed reaction is Endohydrolysis of (1-&gt;4)-beta-D-glucosidic linkages in cellulose, lichenin and cereal beta-D-glucans.. The chain is Endoglucanase 8 from Oryza sativa subsp. japonica (Rice).